The following is a 229-amino-acid chain: 2-C-methyl-D-erythritol 4-phosphate cytidylyltransferase (229 aa).

It belongs to the IspD/TarI cytidylyltransferase family. IspD subfamily.

The enzyme catalyses 2-C-methyl-D-erythritol 4-phosphate + CTP + H(+) = 4-CDP-2-C-methyl-D-erythritol + diphosphate. The protein operates within isoprenoid biosynthesis; isopentenyl diphosphate biosynthesis via DXP pathway; isopentenyl diphosphate from 1-deoxy-D-xylulose 5-phosphate: step 2/6. Catalyzes the formation of 4-diphosphocytidyl-2-C-methyl-D-erythritol from CTP and 2-C-methyl-D-erythritol 4-phosphate (MEP). The chain is 2-C-methyl-D-erythritol 4-phosphate cytidylyltransferase from Neisseria meningitidis serogroup C (strain 053442).